Here is a 274-residue protein sequence, read N- to C-terminus: Large ribosomal subunit protein uL2 (274 aa).

Disordered regions lie at residues 28–53 and 221–274; these read KPYA…TTRH and RGTA…RTKK. Residues 39–48 show a composition bias toward low complexity; the sequence is KSGGRNNNGR. Positions 253 to 274 are enriched in basic residues; the sequence is KGKKTRKNKRTEHFIVHRRTKK.

This sequence belongs to the universal ribosomal protein uL2 family. As to quaternary structure, part of the 50S ribosomal subunit. Forms a bridge to the 30S subunit in the 70S ribosome.

Functionally, one of the primary rRNA binding proteins. Required for association of the 30S and 50S subunits to form the 70S ribosome, for tRNA binding and peptide bond formation. It has been suggested to have peptidyltransferase activity; this is somewhat controversial. Makes several contacts with the 16S rRNA in the 70S ribosome. The polypeptide is Large ribosomal subunit protein uL2 (Proteus mirabilis (strain HI4320)).